We begin with the raw amino-acid sequence, 347 residues long: uncharacterized protein (347 aa).

A run of 10 helical transmembrane segments spans residues 15 to 35 (FVPS…DSLL), 46 to 66 (VAVG…VPWV), 84 to 104 (VLSA…ADFI), 111 to 131 (FWGG…SLIV), 149 to 169 (GWYI…LIMP), 182 to 202 (INYF…AVVI), 214 to 234 (AMAP…VALI), 249 to 269 (FYIF…MAII), 283 to 303 (AMSW…SHLV), and 312 to 332 (IDYI…ITLI).

It belongs to the tellurite-resistance/dicarboxylate transporter (TDT) family.

The protein localises to the cell membrane. This is an uncharacterized protein from Methanocaldococcus jannaschii (strain ATCC 43067 / DSM 2661 / JAL-1 / JCM 10045 / NBRC 100440) (Methanococcus jannaschii).